A 479-amino-acid polypeptide reads, in one-letter code: Flavonol 3-O-glucosyltransferase UGT71C4 (479 aa).

Catalysis depends on H17, which acts as the Proton acceptor. H17 serves as a coordination point for an anthocyanidin. D127 (charge relay) is an active-site residue. Residues T150, A350, Q352, H367, W370, N371, S372, and E375 each coordinate UDP-alpha-D-glucose. Residue A390 coordinates an anthocyanidin. The UDP-alpha-D-glucose site is built by E391 and Q392.

Belongs to the UDP-glycosyltransferase family.

It carries out the reaction a flavonol + UDP-alpha-D-glucose = a flavonol 3-O-beta-D-glucoside + UDP + H(+). The enzyme catalyses a 7-O-hydroxy-flavonol + UDP-alpha-D-glucose = a flavonol 7-O-beta-D-glucoside + UDP + H(+). Its function is as follows. Possesses quercetin 3-O-glucosyltransferase and 7-O-glucosyltransferase activities in vitro. Also active in vitro on benzoates and benzoate derivatives. The chain is Flavonol 3-O-glucosyltransferase UGT71C4 from Arabidopsis thaliana (Mouse-ear cress).